A 141-amino-acid polypeptide reads, in one-letter code: Cystatin (141 aa).

The first 26 residues, 1–26, serve as a signal peptide directing secretion; it reads MVHSQLPVAGPLRLLCALLLLPSATM. Residues 29-129 form the Cystatin domain; it reads GGLSPRSVTD…CRFQVWSRPW (101 aa). A Secondary area of contact motif is present at residues 73–77; sequence QVVSG. Cystine bridges form between C91-C107 and C120-C140.

It belongs to the cystatin family. Expressed at a low level by the venom gland (at protein level).

Its subcellular location is the secreted. Functionally, inhibits various C1 cysteine proteases including cathepsin L, papain and cathepsin B. This protein has no toxic activity and its function in the venom is unknown. It may play a role as a housekeeping or regulatory protein. This chain is Cystatin, found in Pseudechis porphyriacus (Red-bellied black snake).